The chain runs to 134 residues: Small ribosomal subunit protein uS12 (134 aa).

The interval methionine 1–glycine 26 is disordered. The segment covering arginine 9–lysine 20 has biased composition (basic residues). Aspartate 89 is subject to 3-methylthioaspartic acid. The segment at aspartate 103–lysine 134 is disordered. Positions serine 113–lysine 123 are enriched in basic residues. Over residues alanine 124 to lysine 134 the composition is skewed to low complexity.

This sequence belongs to the universal ribosomal protein uS12 family. Part of the 30S ribosomal subunit. Contacts proteins S8 and S17. May interact with IF1 in the 30S initiation complex.

Its function is as follows. With S4 and S5 plays an important role in translational accuracy. In terms of biological role, interacts with and stabilizes bases of the 16S rRNA that are involved in tRNA selection in the A site and with the mRNA backbone. Located at the interface of the 30S and 50S subunits, it traverses the body of the 30S subunit contacting proteins on the other side and probably holding the rRNA structure together. The combined cluster of proteins S8, S12 and S17 appears to hold together the shoulder and platform of the 30S subunit. This Deinococcus geothermalis (strain DSM 11300 / CIP 105573 / AG-3a) protein is Small ribosomal subunit protein uS12.